The following is a 299-amino-acid chain: 4-hydroxy-tetrahydrodipicolinate synthase (299 aa).

Threonine 51 contributes to the pyruvate binding site. Tyrosine 139 serves as the catalytic Proton donor/acceptor. Lysine 167 serves as the catalytic Schiff-base intermediate with substrate. Isoleucine 209 contributes to the pyruvate binding site.

Belongs to the DapA family. In terms of assembly, homotetramer; dimer of dimers.

Its subcellular location is the cytoplasm. It carries out the reaction L-aspartate 4-semialdehyde + pyruvate = (2S,4S)-4-hydroxy-2,3,4,5-tetrahydrodipicolinate + H2O + H(+). It functions in the pathway amino-acid biosynthesis; L-lysine biosynthesis via DAP pathway; (S)-tetrahydrodipicolinate from L-aspartate: step 3/4. Functionally, catalyzes the condensation of (S)-aspartate-beta-semialdehyde [(S)-ASA] and pyruvate to 4-hydroxy-tetrahydrodipicolinate (HTPA). The chain is 4-hydroxy-tetrahydrodipicolinate synthase from Methylobacterium radiotolerans (strain ATCC 27329 / DSM 1819 / JCM 2831 / NBRC 15690 / NCIMB 10815 / 0-1).